The chain runs to 240 residues: Heme oxygenase 1 (240 aa).

Residues R10, H17, Y125, K168, and R172 each coordinate heme b.

This sequence belongs to the heme oxygenase family.

It carries out the reaction heme b + 3 reduced [NADPH--hemoprotein reductase] + 3 O2 = biliverdin IXalpha + CO + Fe(2+) + 3 oxidized [NADPH--hemoprotein reductase] + 3 H2O + H(+). Catalyzes the opening of the heme ring with the release of iron. Key enzyme in the synthesis of the chromophoric part of the photosynthetic antennae. The chain is Heme oxygenase 1 (pbsA1) from Synechocystis sp. (strain ATCC 27184 / PCC 6803 / Kazusa).